We begin with the raw amino-acid sequence, 438 residues long: GTPase Der (438 aa).

EngA-type G domains lie at 4-168 and 177-352; these read PIVA…PKGY and IRIA…TNYS. GTP contacts are provided by residues 10–17, 57–61, 120–123, 183–190, 230–234, and 295–298; these read GRPNVGKS, DTGGI, NKID, GKPNVGKS, DTAGL, and NKWD. Positions 353–437 constitute a KH-like domain; the sequence is KRISTGVLND…GIKMEFRERK (85 aa).

The protein belongs to the TRAFAC class TrmE-Era-EngA-EngB-Septin-like GTPase superfamily. EngA (Der) GTPase family. In terms of assembly, associates with the 50S ribosomal subunit.

In terms of biological role, GTPase that plays an essential role in the late steps of ribosome biogenesis. This chain is GTPase Der, found in Clostridium tetani (strain Massachusetts / E88).